The primary structure comprises 328 residues: Glyoxylate reductase/hydroxypyruvate reductase (328 aa).

Serine 36 is subject to Phosphoserine. 83 to 84 (VG) provides a ligand contact to substrate. Residues 162 to 164 (GRI), 185 to 188 (RQPR), serine 217, and isoleucine 243 each bind NADP(+). Substrate is bound by residues arginine 245 and aspartate 269. At serine 272 the chain carries Phosphoserine. Catalysis depends on histidine 293, which acts as the Proton donor. 293–296 (HIGS) contributes to the substrate binding site. Glycine 295 is an NADP(+) binding site. Threonine 298 carries the post-translational modification Phosphothreonine.

The protein belongs to the D-isomer specific 2-hydroxyacid dehydrogenase family. Homodimer. As to expression, ubiquitous. Most abundantly expressed in the liver.

The catalysed reaction is glycolate + NADP(+) = glyoxylate + NADPH + H(+). It catalyses the reaction (R)-glycerate + NAD(+) = 3-hydroxypyruvate + NADH + H(+). The enzyme catalyses (R)-glycerate + NADP(+) = 3-hydroxypyruvate + NADPH + H(+). In terms of biological role, enzyme with hydroxy-pyruvate reductase, glyoxylate reductase and D-glycerate dehydrogenase enzymatic activities. Reduces hydroxypyruvate to D-glycerate, glyoxylate to glycolate, oxidizes D-glycerate to hydroxypyruvate. This is Glyoxylate reductase/hydroxypyruvate reductase (GRHPR) from Homo sapiens (Human).